The primary structure comprises 476 residues: Membrane-bound lytic murein transglycosylase F (476 aa).

Positions 1–15 (MRSFLLILFCVSLLT) are cleaved as a signal peptide. Residues 16–258 (GCQGERVDAA…HLNEKYFAHV (243 aa)) form a non-LT domain region. The LT domain stretch occupies residues 259-476 (KRFDYVDTRA…QSEISAAQPN (218 aa)). Residue Glu-303 is part of the active site. The segment at 456 to 476 (EAQQQTAEKQSQSEISAAQPN) is disordered.

In the N-terminal section; belongs to the bacterial solute-binding protein 3 family. The protein in the C-terminal section; belongs to the transglycosylase Slt family.

It localises to the cell outer membrane. It carries out the reaction Exolytic cleavage of the (1-&gt;4)-beta-glycosidic linkage between N-acetylmuramic acid (MurNAc) and N-acetylglucosamine (GlcNAc) residues in peptidoglycan, from either the reducing or the non-reducing ends of the peptidoglycan chains, with concomitant formation of a 1,6-anhydrobond in the MurNAc residue.. In terms of biological role, murein-degrading enzyme that degrades murein glycan strands and insoluble, high-molecular weight murein sacculi, with the concomitant formation of a 1,6-anhydromuramoyl product. Lytic transglycosylases (LTs) play an integral role in the metabolism of the peptidoglycan (PG) sacculus. Their lytic action creates space within the PG sacculus to allow for its expansion as well as for the insertion of various structures such as secretion systems and flagella. This chain is Membrane-bound lytic murein transglycosylase F, found in Shewanella loihica (strain ATCC BAA-1088 / PV-4).